Consider the following 149-residue polypeptide: 5-hydroxytryptamine receptor 1E (149 aa).

Residues 1-6 (HQPANY) lie on the Extracellular side of the membrane. Residues 7–31 (LICSLAVTDLLVAVLVMPLSIMYIV) traverse the membrane as a helical segment. Residues 32 to 39 (MDSWRLGY) are Cytoplasmic-facing. Residues 40-65 (FICEVWLSVDMTCCTCSILHLCVIAL) traverse the membrane as a helical segment. A disulfide bridge connects residues cysteine 42 and cysteine 120. Serotonin-binding residues include aspartate 49 and cysteine 53. The short motif at 66-68 (DRY) is the DRY motif; important for ligand-induced conformation changes element. The Extracellular segment spans residues 66-85 (DRYWAITNAIEYARKRTAKR). The chain crosses the membrane as a helical span at residues 86–104 (AGLMILTVWTISIFISMPP). Residues 105-149 (LFWRSHRQLSPPPSQCAIQHDHVIYTIYSTLGAFYIPLTLILILY) lie on the Cytoplasmic side of the membrane.

This sequence belongs to the G-protein coupled receptor 1 family.

It localises to the cell membrane. Its function is as follows. G-protein coupled receptor for 5-hydroxytryptamine (serotonin). Also functions as a receptor for various alkaloids and psychoactive substances. Ligand binding causes a conformation change that triggers signaling via guanine nucleotide-binding proteins (G proteins) and modulates the activity of downstream effectors, such as adenylate cyclase. HTR1E is coupled to G(i)/G(o) G alpha proteins and mediates inhibitory neurotransmission by inhibiting adenylate cyclase activity. The polypeptide is 5-hydroxytryptamine receptor 1E (HTR1E) (Sus scrofa (Pig)).